We begin with the raw amino-acid sequence, 472 residues long: Karilysin (472 aa).

A signal peptide spans 1 to 20 (MKRFILLFFLSTIAIFKVYS). Positions 21 to 34 (QRLYDNGPLTGDNN) are cleaved as a propeptide — activation peptide. Zn(2+) contacts are provided by histidine 102, aspartate 104, histidine 117, histidine 133, and histidine 155. Glutamate 156 serves as the catalytic Proton donor/acceptor. Zn(2+) contacts are provided by histidine 159 and histidine 165. A propeptide spans 196-386 (YGYPFSISGP…AVSCSRTISP (191 aa)) (removed in short form). The propeptide at 387–472 (FTLSPNPATD…QTYTQKLIKK (86 aa)) is removed in long form.

Belongs to the peptidase M10A family. It depends on Zn(2+) as a cofactor. Post-translationally, processes itself into the mature 18-kDa enzyme (Kly18) through sequential autoproteolytic cleavage at both the N- and C-termini. However, the maturation intermediate Kly38 is found to be more active than Kly18 and the rate for its processing is slow, which raises the question as to whether Kly38 is a physiologically relevant entity.

The protein resides in the secreted. Its activity is regulated as follows. Autoprocessing and proteolytic activity are completely inhibited by EDTA and 1,10-phenanthroline in vitro. Proteolytic activity is 3-fold enhanced by Ca(2+) due to stabilization of the protein structure but inhibited by an excess of Zn(2+). Inhibitory studies of karilysin identified several phage display-selected peptides with apparent inhibition constants (Ki) in the micromolar range, among which is the tetrapeptide SWFP (Ki=10.7 uM). Its function is as follows. Metalloprotease able to cleave casein, gelatin, elastin, fibrinogen and fibronectin. Shows exclusive preference for hydrophobic residues, especially Leu, Tyr and Met, at the P1' position of substrates, and for Pro or Ala at P3. Can efficiently cleave the antimicrobial peptide LL-37 which is a component of the immune system, leading to a significant reduction of its bactericidal activity. Is also able to inhibit all pathways of the human complement system. The classical and lectin complement pathways are inhibited because of the efficient degradation of mannose-binding lectin, ficolin-2, ficolin-3, and C4 by karilysin, whereas inhibition of the terminal pathway is caused by cleavage of C5. Thus, karilysin appears to be a major virulence factor of T.forsythia that contributes to evasion of the human immune response and periodontal disease. Seems to act synergistically with gingipains from the periodontal pathogen P.gingivalis present at the same sites of infection. This chain is Karilysin (kly), found in Tannerella forsythia (strain ATCC 43037 / JCM 10827 / CCUG 21028 A / KCTC 5666 / FDC 338) (Bacteroides forsythus).